The sequence spans 92 residues: Secreted RxLR effector protein 21 (92 aa).

The N-terminal stretch at 1 to 21 (MNLSTLLLTLACISQLHGGSA) is a signal peptide. The RxLR motif lies at 30–33 (RQLR).

The protein belongs to the RxLR effector family.

The protein localises to the secreted. It localises to the host nucleus. It is found in the host cytoplasm. Its function is as follows. Secreted effector that completely suppresses the host cell death induced by cell death-inducing proteins. The chain is Secreted RxLR effector protein 21 from Plasmopara viticola (Downy mildew of grapevine).